We begin with the raw amino-acid sequence, 189 residues long: Ribonuclease M5 (189 aa).

Residues 8 to 91 (KEIIVVEGKD…AFLPKEEALA (84 aa)) form the Toprim domain. Residues Glu14, Asp60, and Asp62 each coordinate Mg(2+).

It belongs to the ribonuclease M5 family. The cofactor is Mg(2+).

The protein localises to the cytoplasm. It catalyses the reaction Endonucleolytic cleavage of RNA, removing 21 and 42 nucleotides, respectively, from the 5'- and 3'-termini of a 5S-rRNA precursor.. Required for correct processing of both the 5' and 3' ends of 5S rRNA precursor. Cleaves both sides of a double-stranded region yielding mature 5S rRNA in one step. The polypeptide is Ribonuclease M5 (Bacillus cereus (strain ATCC 14579 / DSM 31 / CCUG 7414 / JCM 2152 / NBRC 15305 / NCIMB 9373 / NCTC 2599 / NRRL B-3711)).